We begin with the raw amino-acid sequence, 728 residues long: Propionyl-CoA carboxylase alpha chain, mitochondrial (728 aa).

The transit peptide at 1–52 directs the protein to the mitochondrion; sequence MAGFWVGTAPLVAAGRRGRWPPQQLMLSAALRTLKHVLYYSRQCLMVSRNLG. The region spanning 62–509 is the Biotin carboxylation domain; it reads TFDKILVANR…STKFLSDVYP (448 aa). K65 is modified (N6-acetyllysine; alternate). At K65 the chain carries N6-succinyllysine; alternate. N6-succinyllysine is present on K119. Position 150 is an N6-acetyllysine; alternate (K150). K150 bears the N6-succinyllysine; alternate mark. K177 contacts ATP. The ATP-grasp domain occupies 181 to 378; that stretch reads KLLAKKAEVN…LVQEMIRVAK (198 aa). Position 200 is an N6-acetyllysine; alternate (K200). K200 bears the N6-succinyllysine; alternate mark. Residues 209–270, E261, and N296 contribute to the ATP site; that span reads AREI…PRHI. The residue at position 252 (S252) is a Phosphoserine. K262 is subject to N6-succinyllysine. K328 is modified (N6-acetyllysine; alternate). K328 is subject to N6-succinyllysine; alternate. The Mg(2+) site is built by E336, E349, and N351. The Mn(2+) site is built by E336, E349, and N351. Residue E349 is part of the active site. N6-succinyllysine occurs at positions 385 and 407. F409 serves as a coordination point for biotin. K496 carries the post-translational modification N6-acetyllysine. 3 positions are modified to N6-succinyllysine: K502, K513, and K648. Positions 653-728 constitute a Biotinyl-binding domain; sequence KVTEDTSSVL…GEGDLLVELE (76 aa). K694 is modified (N6-biotinyllysine; by HLCS).

In terms of assembly, the holoenzyme is a dodecamer composed of 6 PCCA/alpha subunits and 6 PCCB/beta subunits. Interacts (via the biotin carboxylation domain) with SIRT4. Interacts with SIRT3 and SIRT5. Mg(2+) is required as a cofactor. It depends on Mn(2+) as a cofactor. Biotin serves as cofactor. In terms of processing, acetylated. The biotin cofactor is covalently attached to the C-terminal biotinyl-binding domain and is required for the catalytic activity. Biotinylation is catalyzed by HLCS.

The protein localises to the mitochondrion matrix. It catalyses the reaction propanoyl-CoA + hydrogencarbonate + ATP = (S)-methylmalonyl-CoA + ADP + phosphate + H(+). The catalysed reaction is butanoyl-CoA + hydrogencarbonate + ATP = (2S)-ethylmalonyl-CoA + ADP + phosphate + H(+). The protein operates within metabolic intermediate metabolism; propanoyl-CoA degradation; succinyl-CoA from propanoyl-CoA: step 1/3. In terms of biological role, this is one of the 2 subunits of the biotin-dependent propionyl-CoA carboxylase (PCC), a mitochondrial enzyme involved in the catabolism of odd chain fatty acids, branched-chain amino acids isoleucine, threonine, methionine, and valine and other metabolites. Propionyl-CoA carboxylase catalyzes the carboxylation of propionyl-CoA/propanoyl-CoA to D-methylmalonyl-CoA/(S)-methylmalonyl-CoA. Within the holoenzyme, the alpha subunit catalyzes the ATP-dependent carboxylation of the biotin carried by the biotin carboxyl carrier (BCC) domain, while the beta subunit then transfers the carboxyl group from carboxylated biotin to propionyl-CoA. Propionyl-CoA carboxylase also significantly acts on butyryl-CoA/butanoyl-CoA, which is converted to ethylmalonyl-CoA/(2S)-ethylmalonyl-CoA at a much lower rate. Other alternative minor substrates include (2E)-butenoyl-CoA/crotonoyl-CoA. The polypeptide is Propionyl-CoA carboxylase alpha chain, mitochondrial (Homo sapiens (Human)).